The following is a 397-amino-acid chain: Presenilin-like protein At2g29900 (397 aa).

At 1 to 17 the chain is on the cytoplasmic side; the sequence is MDRNQRPRSILDSLGEE. Residues 18–38 form a helical membrane-spanning segment; sequence LIAILTPVSICMFTVVLLVCI. Residues 39 to 76 lie on the Lumenal side of the membrane; sequence LNSDPSSSSASFSSIATAAYSESDSDSSWDKFVGALLN. A helical membrane pass occupies residues 77 to 97; the sequence is SVVFVAAITVATFVLVLLFYL. The Cytoplasmic portion of the chain corresponds to 98–106; that stretch reads RCVKFLKFY. Residues 107–127 traverse the membrane as a helical segment; it reads MGFSAFIVLGNLGGEILVLLI. Residues 128–135 lie on the Lumenal side of the membrane; it reads DRFRFPID. Residues 136-156 form a helical membrane-spanning segment; the sequence is SITFLILLFNFSVVGVFAVFM. At 157-158 the chain is on the cytoplasmic side; that stretch reads SK. A helical transmembrane segment spans residues 159–179; it reads FSILITQGYLVWIGVLVAYFF. The Lumenal portion of the chain corresponds to 180-188; it reads TLLPEWTTW. A helical transmembrane segment spans residues 189 to 209; the sequence is VLLVALALYDIAAVLLPVGPL. Residue Asp198 is part of the active site. Topologically, residues 210 to 305 are cytoplasmic; sequence RLLVEMAISR…NSETFLEGIG (96 aa). A helical membrane pass occupies residues 306-326; the sequence is LGSSGAIKLGLGDFIFYSVLV. Asp318 is a catalytic residue. Topologically, residues 327–336 are lumenal; sequence GRAAMYDLMT. Residues 337 to 357 form a helical membrane-spanning segment; it reads VYACYLAIIAGLGITLMLLSV. The Cytoplasmic segment spans residues 358–366; the sequence is YQKALPALP. The PAL motif lies at 363–365; that stretch reads PAL. The helical intramembrane region spans 367–387; sequence VSIMLGVVFYFLARLLLEVFV. The Cytoplasmic portion of the chain corresponds to 388-397; that stretch reads VQCSSNLVMF.

This sequence belongs to the peptidase A22A family. As to quaternary structure, homodimer. Probable component of the gamma-secretase complex, a complex composed of a presenilin homodimer, nicastrin, APH1 and PEN2.

The protein resides in the endoplasmic reticulum membrane. Its subcellular location is the golgi apparatus membrane. Its function is as follows. Probable subunit of the gamma-secretase complex, an endoprotease complex that catalyzes the intramembrane cleavage of integral membrane proteins such as Notch receptors. In Arabidopsis thaliana (Mouse-ear cress), this protein is Presenilin-like protein At2g29900.